The chain runs to 272 residues: U11/U12 small nuclear ribonucleoprotein 35 kDa protein (272 aa).

In terms of domain architecture, RRM spans 51-129 (LTLFVSRLSP…REVFVDFELE (79 aa)). 2 stretches are compositionally biased toward basic and acidic residues: residues 146 to 162 (GKKE…DRPF) and 190 to 272 (RDRS…EHNR). A disordered region spans residues 146 to 272 (GKKESGQLRF…RKHRSDEHNR (127 aa)). Residues 221 to 258 (TKDDKEQNAEHTKRERSREQAKNDKDKEKKDSKRERSR) are a coiled coil.

The protein localises to the nucleus. The polypeptide is U11/U12 small nuclear ribonucleoprotein 35 kDa protein (snrnp35) (Xenopus laevis (African clawed frog)).